A 1514-amino-acid polypeptide reads, in one-letter code: Mitogen-activated protein kinase-binding protein 1 (1514 aa).

Residue Ala-2 is modified to N-acetylalanine. 12 WD repeats span residues 88-129, 132-173, 175-213, 276-315, 342-381, 387-436, 477-516, 519-561, 565-606, 614-653, 659-698, and 701-740; these read SSRK…QVAE, EHKY…VVAS, KVSS…TSKV, DSFT…FLST, ARYP…KVGK, YHSS…VHGS, DPRV…EMLK, AHDS…SLQQ, EHSS…DGVQ, VRKT…QKKL, GEDG…CVAT, and GHSE…TISM. Disordered regions lie at residues 748–804, 880–925, 951–1256, and 1299–1336; these read RQRQ…PALP, PSLQ…SQPC, EDGI…SSMA, and DIPK…GLGK. The span at 789 to 800 shows a compositional bias: acidic residues; sequence KEGEDEGTEEEL. Polar residues-rich tracts occupy residues 905–925 and 961–971; these read LETS…SQPC and DNPTMDTSEFQ. The span at 996–1011 shows a compositional bias: low complexity; the sequence is DSACSVDYSSSCLSSP. Over residues 1032 to 1048 the composition is skewed to acidic residues; it reads DLEEPAEGDEEEEEEEG. Residues 1113-1126 show a composition bias toward low complexity; it reads PSPSSSSLALMSRP. Composition is skewed to polar residues over residues 1188 to 1200 and 1245 to 1256; these read SPFS…QSVH and HSYQNPTTSSMA. At Ser-1198 the chain carries Phosphoserine.

As to quaternary structure, can form homodimers (via C-terminus). Interacts (via C-terminus) with WDR62 (via C-terminus). Interacts with MAPK9. Interacts (via N-terminus) with NOD2; the interaction is enhanced in presence of muramyl dipeptide (MDP). Interacts with MAPK10. Expressed in intestinal mucosa, where it is detected in epithelial cells, endothelial cells, smooth muscle cells and immune cells, such as lymphocytes. Expressed in kidney.

It is found in the cytoplasm. Its subcellular location is the nucleus. It localises to the cytoskeleton. The protein resides in the spindle pole. Its function is as follows. Negative regulator of NOD2 function. It down-regulates NOD2-induced processes such as activation of NF-kappa-B signaling, IL8 secretion and antibacterial response. Involved in JNK signaling pathway. This is Mitogen-activated protein kinase-binding protein 1 (MAPKBP1) from Homo sapiens (Human).